Reading from the N-terminus, the 240-residue chain is Uridylate kinase (240 aa).

12 to 15 (KLSG) is a binding site for ATP. UMP is bound at residue glycine 54. Residues glycine 55 and arginine 59 each coordinate ATP. Residues aspartate 74 and 135-142 (TGNPFFTT) contribute to the UMP site. ATP-binding residues include threonine 162, tyrosine 168, and aspartate 171.

Belongs to the UMP kinase family. In terms of assembly, homohexamer.

The protein resides in the cytoplasm. The enzyme catalyses UMP + ATP = UDP + ADP. Its pathway is pyrimidine metabolism; CTP biosynthesis via de novo pathway; UDP from UMP (UMPK route): step 1/1. With respect to regulation, inhibited by UTP. Its function is as follows. Catalyzes the reversible phosphorylation of UMP to UDP. This Xanthomonas euvesicatoria pv. vesicatoria (strain 85-10) (Xanthomonas campestris pv. vesicatoria) protein is Uridylate kinase.